Reading from the N-terminus, the 383-residue chain is Galactokinase (383 aa).

34 to 37 (EHTD) provides a ligand contact to substrate. 124–130 (GAGLSSS) is an ATP binding site. The Mg(2+) site is built by serine 130 and glutamate 162. Aspartate 174 serves as the catalytic Proton acceptor. Tyrosine 223 lines the substrate pocket.

Belongs to the GHMP kinase family. GalK subfamily.

Its subcellular location is the cytoplasm. It catalyses the reaction alpha-D-galactose + ATP = alpha-D-galactose 1-phosphate + ADP + H(+). Its pathway is carbohydrate metabolism; galactose metabolism. Catalyzes the transfer of the gamma-phosphate of ATP to D-galactose to form alpha-D-galactose-1-phosphate (Gal-1-P). This is Galactokinase from Yersinia pseudotuberculosis serotype O:1b (strain IP 31758).